The sequence spans 98 residues: MARQKLDRKEIENGLSELDEWELAEGGNAIHRRFVFSNFNEAFGFMTRAALAAEKLDHHPEWTNVYKTVDVTLTTHASGGLTELDFKLAKKMNAYAAK.

The protein belongs to the pterin-4-alpha-carbinolamine dehydratase family.

It carries out the reaction (4aS,6R)-4a-hydroxy-L-erythro-5,6,7,8-tetrahydrobiopterin = (6R)-L-erythro-6,7-dihydrobiopterin + H2O. This chain is Putative pterin-4-alpha-carbinolamine dehydratase, found in Chelativorans sp. (strain BNC1).